A 487-amino-acid chain; its full sequence is PPE family protein PPE10 (487 aa).

The span at Ala398–Gly424 shows a compositional bias: low complexity. The interval Ala398–Glu487 is disordered. Polar residues predominate over residues Pro428–Arg446.

Belongs to the mycobacterial PPE family.

Its subcellular location is the secreted. Plays a major role in the integrity and stability of the capsule. The polypeptide is PPE family protein PPE10 (PPE10) (Mycobacterium tuberculosis (strain CDC 1551 / Oshkosh)).